The following is a 200-amino-acid chain: Guanylyl cyclase-activating protein 2 (200 aa).

Gly-2 carries N-myristoyl glycine lipidation. EF-hand domains are found at residues 14-31 (GEID…FVME), 53-88 (EASQ…VLRG), 89-124 (TLEH…IYQL), and 141-176 (TPEE…DKWV). 15 residues coordinate Ca(2+): Asp-66, Asn-68, Asp-70, Thr-72, Glu-77, Asp-102, Asp-104, Asn-106, Cys-108, Glu-113, Asp-154, Asn-156, Asp-158, Gln-160, and Glu-165.

In terms of processing, the N-terminus is blocked. In terms of tissue distribution, in the retina, it is expressed in cone and rod photoreceptor cells.

It localises to the cell membrane. Its subcellular location is the photoreceptor inner segment. The protein localises to the cell projection. The protein resides in the cilium. It is found in the photoreceptor outer segment. Functionally, stimulates two retinal guanylyl cyclases (GCs) GUCY2D and GUCY2F when free calcium ions concentration is low, and inhibits GUCY2D and GUCY2F when free calcium ions concentration is elevated. This Ca(2+)-sensitive regulation of GCs is a key event in recovery of the dark state of rod photoreceptors following light exposure. May be involved in cone photoreceptor response and recovery of response in bright light. The polypeptide is Guanylyl cyclase-activating protein 2 (GUCA1B) (Homo sapiens (Human)).